Here is a 154-residue protein sequence, read N- to C-terminus: Endoribonuclease YbeY (154 aa).

The Zn(2+) site is built by histidine 117, histidine 121, and histidine 127.

The protein belongs to the endoribonuclease YbeY family. Zn(2+) serves as cofactor.

Its subcellular location is the cytoplasm. Single strand-specific metallo-endoribonuclease involved in late-stage 70S ribosome quality control and in maturation of the 3' terminus of the 16S rRNA. The polypeptide is Endoribonuclease YbeY (Polaromonas sp. (strain JS666 / ATCC BAA-500)).